The following is a 418-amino-acid chain: AA14 family lytic polysaccharide monooxygenase B (418 aa).

The signal sequence occupies residues 1-18 (MIPVFLAAVAAFLPLTSG). N31, N94, and N151 each carry an N-linked (GlcNAc...) asparagine glycan. Intrachain disulfides connect C85–C108, C127–C154, C171–C176, and C178–C200. N201 and N235 each carry an N-linked (GlcNAc...) asparagine glycan. A disulfide bridge links C220 with C236. Low complexity predominate over residues 307–343 (AAATPAPSSSGSSPSSSSPGSSSTASTTSTSGPRPSA). Residues 307 to 364 (AAATPAPSSSGSSPSSSSPGSSSTASTTSTSGPRPSARGFRRSTGERPPTGVPTPRKS) form a disordered region.

Belongs to the polysaccharide monooxygenase AA14 family. The cofactor is Cu(2+).

The protein localises to the secreted. In terms of biological role, lytic polysaccharide monooxygenase (LPMO) that oxidatively cleaves xylan with both C1 and C4 regioselectivity and that specifically targets the protective shield made by heteroxylans that cover cellulose microfibrils in wood. Catalysis by LPMOs requires the reduction of the active-site copper from Cu(II) to Cu(I) by a reducing agent and H(2)O(2) or O(2) as a cosubstrate. Cleavage occurs only when xylans are bound to cellulose and not when they are in solution. Increases the efficiency of wood saccharification through oxidative cleavage of highly refractory xylan-coated cellulose fibers via synergistic relationship with xylan-active enzymes, xylobiohydrolases and cellobiohydrolases. This chain is AA14 family lytic polysaccharide monooxygenase B, found in Trametes coccinea (strain BRFM310) (Pycnoporus coccineus).